A 339-amino-acid chain; its full sequence is Dihydroorotate dehydrogenase (quinone) (339 aa).

Residues 62–66 (AGMDK) and threonine 86 contribute to the FMN site. Residue lysine 66 participates in substrate binding. 111 to 115 (NRMGF) serves as a coordination point for substrate. FMN is bound by residues asparagine 139 and asparagine 172. Residue asparagine 172 participates in substrate binding. Residue serine 175 is the Nucleophile of the active site. Asparagine 177 contributes to the substrate binding site. 2 residues coordinate FMN: lysine 217 and threonine 245. Substrate is bound at residue 246-247 (NT). FMN contacts are provided by residues glycine 268, glycine 297, and 318–319 (YS).

The protein belongs to the dihydroorotate dehydrogenase family. Type 2 subfamily. Monomer. FMN serves as cofactor.

It is found in the cell membrane. It carries out the reaction (S)-dihydroorotate + a quinone = orotate + a quinol. It participates in pyrimidine metabolism; UMP biosynthesis via de novo pathway; orotate from (S)-dihydroorotate (quinone route): step 1/1. In terms of biological role, catalyzes the conversion of dihydroorotate to orotate with quinone as electron acceptor. In Shewanella sp. (strain ANA-3), this protein is Dihydroorotate dehydrogenase (quinone).